The primary structure comprises 857 residues: Dynein regulatory complex protein 11 (857 aa).

The 30-residue stretch at 206-235 folds into the IQ domain; that stretch reads TKLAALQIQKVWRGFHQCKKTVKEREEEMV. A disordered region spans residues 348–388; the sequence is EEKLKKKKKKEDKENKGKKGKKEKKEKKEKKVSLKEKAMKD. A compositionally biased stretch (basic residues) spans 365-375; the sequence is KKGKKEKKEKK. The segment covering 376-387 has biased composition (basic and acidic residues); the sequence is EKKVSLKEKAMK. Position 598-605 (598-605) interacts with ATP; sequence GPSGVGKK. Residues 834-857 are disordered; it reads SLTVGNKEKEKDKGKKGKRGKKKK. The segment covering 847 to 857 has biased composition (basic residues); that stretch reads GKKGKRGKKKK.

This sequence belongs to the AAA ATPase family. DRC11 subfamily. Component of the nexin-dynein regulatory complex (N-DRC).

The protein resides in the cytoplasm. The protein localises to the cytoskeleton. It localises to the flagellum axoneme. Component of the nexin-dynein regulatory complex (N-DRC), a key regulator of ciliary/flagellar motility which maintains the alignment and integrity of the distal axoneme and regulates microtubule sliding in motile axonemes. The sequence is that of Dynein regulatory complex protein 11 (Iqca1) from Mus musculus (Mouse).